A 549-amino-acid polypeptide reads, in one-letter code: Membrane protein insertase YidC (549 aa).

A helical transmembrane segment spans residues 6 to 26; it reads NLLLIGLLLVSFMLWQSWMVD. The interval 35–55 is disordered; sequence ATAESSVPASSGGDVPNQNDA. The next 4 membrane-spanning stretches (helical) occupy residues 349 to 369, 424 to 444, 462 to 482, and 503 to 523; these read QFLHGLVGNWGVAIILITMIV, LGGCFPLLIQMPIFIALYWTL, LSVKDPYYVLPLLMGATMWYI, and PIVFTFMFLWFPSGLTLYWVV.

Belongs to the OXA1/ALB3/YidC family. Type 1 subfamily. As to quaternary structure, interacts with the Sec translocase complex via SecD. Specifically interacts with transmembrane segments of nascent integral membrane proteins during membrane integration.

Its subcellular location is the cell inner membrane. Its function is as follows. Required for the insertion and/or proper folding and/or complex formation of integral membrane proteins into the membrane. Involved in integration of membrane proteins that insert both dependently and independently of the Sec translocase complex, as well as at least some lipoproteins. Aids folding of multispanning membrane proteins. The sequence is that of Membrane protein insertase YidC from Tolumonas auensis (strain DSM 9187 / NBRC 110442 / TA 4).